Reading from the N-terminus, the 693-residue chain is Glycine--tRNA ligase beta subunit (693 aa).

This sequence belongs to the class-II aminoacyl-tRNA synthetase family. As to quaternary structure, tetramer of two alpha and two beta subunits.

Its subcellular location is the cytoplasm. It catalyses the reaction tRNA(Gly) + glycine + ATP = glycyl-tRNA(Gly) + AMP + diphosphate. This Ligilactobacillus salivarius (strain UCC118) (Lactobacillus salivarius) protein is Glycine--tRNA ligase beta subunit.